Here is a 244-residue protein sequence, read N- to C-terminus: tRNA pseudouridine synthase A (244 aa).

The active-site Nucleophile is the Asp-52. Tyr-110 is a binding site for substrate.

The protein belongs to the tRNA pseudouridine synthase TruA family. In terms of assembly, homodimer.

It carries out the reaction uridine(38/39/40) in tRNA = pseudouridine(38/39/40) in tRNA. In terms of biological role, formation of pseudouridine at positions 38, 39 and 40 in the anticodon stem and loop of transfer RNAs. The chain is tRNA pseudouridine synthase A from Geotalea daltonii (strain DSM 22248 / JCM 15807 / FRC-32) (Geobacter daltonii).